Reading from the N-terminus, the 88-residue chain is MEQNSYVIIDETGIHARPATMLVQTASKFDSDIQLEYNGKKVNLKSIMGVMSLGVGKDAEITIYADGSDESDAIQAISDVLSKEGLTK.

The region spanning 1-88 (MEQNSYVIID…DVLSKEGLTK (88 aa)) is the HPr domain. The active-site Pros-phosphohistidine intermediate is His15. Phosphoserine; by HPrK/P is present on Ser46.

The protein resides in the cytoplasm. Phosphorylation on Ser-46 inhibits the phosphoryl transfer from enzyme I to HPr. In terms of biological role, general (non sugar-specific) component of the phosphoenolpyruvate-dependent sugar phosphotransferase system (sugar PTS). This major carbohydrate active-transport system catalyzes the phosphorylation of incoming sugar substrates concomitantly with their translocation across the cell membrane. The phosphoryl group from phosphoenolpyruvate (PEP) is transferred to the phosphoryl carrier protein HPr by enzyme I. Phospho-HPr then transfers it to the PTS EIIA domain. P-Ser-HPr interacts with the catabolite control protein A (CcpA), forming a complex that binds to DNA at the catabolite response elements cre, operator sites preceding a large number of catabolite-regulated genes. Thus, P-Ser-HPr is a corepressor in carbon catabolite repression (CCR), a mechanism that allows bacteria to coordinate and optimize the utilization of available carbon sources. P-Ser-HPr also plays a role in inducer exclusion, in which it probably interacts with several non-PTS permeases and inhibits their transport activity. This is Phosphocarrier protein HPr (ptsH) from Staphylococcus aureus (strain MSSA476).